Consider the following 635-residue polypeptide: Moesin/ezrin/radixin homolog 2 (635 aa).

One can recognise an FERM domain in the interval 12–305 (LSVRVSTFDS…GNHDLYMRRR (294 aa)).

As to quaternary structure, interacts with Moe and arm at the adherens junction. Forms a complex with Kibra and Ex. Interacts (via FERM domain) with Sav (via FBM motif). Interacts with Schip1. In terms of tissue distribution, expressed predominantly in the germline. Expressed in the developing oocyte from stage 6 to the end of oogenesis and in the apical ends of follical cells from stage 10. Ubiquitous expression throughout embryogenesis with enhanced expression in mesoderm of early embryos and midgut of late embryos. In embryonic CNS, expression is seen in neuropil and developing brain and is enhanced in neuronal cell bodies. In embryonic PNS, expression is seen within the cell body. In third instar larvae, expression is uniform in the eye imaginal disk and is enhanced at the morphogenetic furrow. In pupal eyes, expression is seen in the cytoplasm of secondary and tertiary pigment cells, bristle precursor cells and rhabdomeres.

The protein resides in the cell junction. It is found in the adherens junction. Its subcellular location is the cell membrane. The protein localises to the cytoplasm. It localises to the cytoskeleton. The protein resides in the apical cell membrane. It is found in the cell projection. Its subcellular location is the rhabdomere. Its function is as follows. Regulator of the Hippo/SWH (Sav/Wts/Hpo) signaling pathway, a signaling pathway that plays a pivotal role in organ size control and tumor suppression by restricting proliferation and promoting apoptosis. The core of this pathway is composed of a kinase cascade wherein Hippo (Hpo), in complex with its regulatory protein Salvador (Sav), phosphorylates and activates Warts (Wts) in complex with its regulatory protein Mats, which in turn phosphorylates and inactivates the Yorkie (Yki) oncoprotein. Mer acts synergistically along with Ex and Kibra to regulate the Hippo signaling pathway. This is Moesin/ezrin/radixin homolog 2 (Mer) from Drosophila melanogaster (Fruit fly).